We begin with the raw amino-acid sequence, 932 residues long: Probable UDP-N-acetylglucosamine--peptide N-acetylglucosaminyltransferase SPINDLY (932 aa).

Positions 1 to 15 are enriched in basic and acidic residues; it reads MAWTEKDVENGKESD. The disordered stretch occupies residues 1-39; it reads MAWTEKDVENGKESDSLGNNGFLKGVQSSSDSKGSPVRI. TPR repeat units lie at residues 48 to 81, 82 to 115, 116 to 149, 157 to 190, 191 to 224, 225 to 258, 266 to 299, 300 to 333, 334 to 367, 369 to 401, and 402 to 435; these read GKDA…DSGS, IESL…DPQN, ACAL…DPSY, AIVL…DSHY, APAY…RPMY, AEAY…SPNF, AIAL…NWHY, ADAM…NPHC, AEAC…KPNF, QSLN…NPTY, and AEAY…DPDS. A catalytic region region spans residues 436 to 932; it reads RNAGQNRLLA…NQAGNPGKQS (497 aa). The interval 881 to 902 is disordered; sequence VSPIEKTRISASKDGPIKENGF.

It belongs to the glycosyltransferase 41 family. O-GlcNAc transferase subfamily. In terms of tissue distribution, expressed in stems, leaves and flowers. Expressed during all stages of corolla maturation.

It is found in the nucleus. It catalyses the reaction L-seryl-[protein] + UDP-N-acetyl-alpha-D-glucosamine = 3-O-(N-acetyl-beta-D-glucosaminyl)-L-seryl-[protein] + UDP + H(+). The catalysed reaction is L-threonyl-[protein] + UDP-N-acetyl-alpha-D-glucosamine = 3-O-(N-acetyl-beta-D-glucosaminyl)-L-threonyl-[protein] + UDP + H(+). The protein operates within protein modification; protein glycosylation. Functionally, probable O-linked N-acetylglucosamine transferase (OGT) involved in various processes such as gibberellin (GA) signaling pathway. OGTs catalyze the addition of nucleotide-activated sugars directly onto the polypeptide through O-glycosidic linkage with the hydroxyl of serine or threonine. Probably acts by adding O-linked sugars to yet unknown proteins. This is Probable UDP-N-acetylglucosamine--peptide N-acetylglucosaminyltransferase SPINDLY (SPY) from Petunia hybrida (Petunia).